We begin with the raw amino-acid sequence, 412 residues long: SFNFCLPNLSFRSSCSSRPCVPSSCCGTTLPGACNIPANVGSCNWFCEGSFDGNEKETMQFLNDRLASYLEKVRQLERENAELESRILERSQQQEPLVCPNYQSYFRTIEELQQKILCAKSENARLVVQIDNAKLAADDFRTKYETELGLRQLVESDINGLRRILDELTLCKSDLEAQVESLKEELICLKSNHEEEVNTLRSQLGDRLNVEVDAAPTVDLNRVLNETRAQYEALVETNRRDVEEWYIRQTEELNKQVVSSSEQLQSCQTEIIELRRTVNALEVELQAQHNLRDSLENTLTETEARYSCQLNQVQSLISNVESQLAEIRGDLERQNQEYQVLLDVRARLECEINTYRGLLDSEDCKLPCNPCATTNACGKTITPCISSPCAPAAPCTPCVPRSRCGPCNSYVR.

Serine 1 is modified (N-acetylserine). The segment at 1–55 (SFNFCLPNLSFRSSCSSRPCVPSSCCGTTLPGACNIPANVGSCNWFCEGSFDGNE) is head. The IF rod domain occupies 55–366 (EKETMQFLND…GLLDSEDCKL (312 aa)). Positions 56–90 (KETMQFLNDRLASYLEKVRQLERENAELESRILER) are coil 1A. Residues 91–101 (SQQQEPLVCPN) form a linker 1 region. A coil 1B region spans residues 102-202 (YQSYFRTIEE…HEEEVNTLRS (101 aa)). The interval 203–218 (QLGDRLNVEVDAAPTV) is linker 12. Residues 219–362 (DLNRVLNETR…NTYRGLLDSE (144 aa)) are coil 2. Residues 363-412 (DCKLPCNPCATTNACGKTITPCISSPCAPAAPCTPCVPRSRCGPCNSYVR) form a tail region.

This sequence belongs to the intermediate filament family.

Functionally, wool microfibrillar keratin. The polypeptide is Keratin, type I microfibrillar 48 kDa, component 8C-1 (Ovis aries (Sheep)).